Here is a 328-residue protein sequence, read N- to C-terminus: DNA-directed RNA polymerase subunit alpha 2 (328 aa).

The alpha N-terminal domain (alpha-NTD) stretch occupies residues 1–234; it reads MQGSVIEFLK…EQLDAFVDLR (234 aa). The segment at 248-328 is alpha C-terminal domain (alpha-CTD); it reads FDPILLRPVD…NWPPASLSED (81 aa).

Belongs to the RNA polymerase alpha chain family. In terms of assembly, homodimer. The RNAP catalytic core consists of 2 alpha, 1 beta, 1 beta' and 1 omega subunit. When a sigma factor is associated with the core the holoenzyme is formed, which can initiate transcription.

It catalyses the reaction RNA(n) + a ribonucleoside 5'-triphosphate = RNA(n+1) + diphosphate. In terms of biological role, DNA-dependent RNA polymerase catalyzes the transcription of DNA into RNA using the four ribonucleoside triphosphates as substrates. The protein is DNA-directed RNA polymerase subunit alpha 2 of Psychromonas ingrahamii (strain DSM 17664 / CCUG 51855 / 37).